Reading from the N-terminus, the 159-residue chain is NAD(P)H-quinone oxidoreductase subunit J, chloroplastic (159 aa).

The protein belongs to the complex I 30 kDa subunit family. As to quaternary structure, NDH is composed of at least 16 different subunits, 5 of which are encoded in the nucleus.

The protein localises to the plastid. Its subcellular location is the chloroplast thylakoid membrane. The catalysed reaction is a plastoquinone + NADH + (n+1) H(+)(in) = a plastoquinol + NAD(+) + n H(+)(out). It catalyses the reaction a plastoquinone + NADPH + (n+1) H(+)(in) = a plastoquinol + NADP(+) + n H(+)(out). Its function is as follows. NDH shuttles electrons from NAD(P)H:plastoquinone, via FMN and iron-sulfur (Fe-S) centers, to quinones in the photosynthetic chain and possibly in a chloroplast respiratory chain. The immediate electron acceptor for the enzyme in this species is believed to be plastoquinone. Couples the redox reaction to proton translocation, and thus conserves the redox energy in a proton gradient. This is NAD(P)H-quinone oxidoreductase subunit J, chloroplastic from Populus trichocarpa (Western balsam poplar).